We begin with the raw amino-acid sequence, 530 residues long: Type II methyltransferase M.MjaII (530 aa).

Belongs to the N(4)/N(6)-methyltransferase family. N(4) subfamily.

The enzyme catalyses a 2'-deoxycytidine in DNA + S-adenosyl-L-methionine = an N(4)-methyl-2'-deoxycytidine in DNA + S-adenosyl-L-homocysteine + H(+). Its function is as follows. An alpha subtype methylase that recognizes the double-stranded sequence 5'-GGNCC-3', methylates C-5 on both strands, and protects the DNA from cleavage by the MjaII endonuclease. In Methanocaldococcus jannaschii (strain ATCC 43067 / DSM 2661 / JAL-1 / JCM 10045 / NBRC 100440) (Methanococcus jannaschii), this protein is Type II methyltransferase M.MjaII (mjaIIM).